A 212-amino-acid chain; its full sequence is ATP-dependent Clp protease proteolytic subunit (212 aa).

S114 functions as the Nucleophile in the catalytic mechanism. The active site involves H139.

It belongs to the peptidase S14 family. In terms of assembly, fourteen ClpP subunits assemble into 2 heptameric rings which stack back to back to give a disk-like structure with a central cavity, resembling the structure of eukaryotic proteasomes.

Its subcellular location is the cytoplasm. It catalyses the reaction Hydrolysis of proteins to small peptides in the presence of ATP and magnesium. alpha-casein is the usual test substrate. In the absence of ATP, only oligopeptides shorter than five residues are hydrolyzed (such as succinyl-Leu-Tyr-|-NHMec, and Leu-Tyr-Leu-|-Tyr-Trp, in which cleavage of the -Tyr-|-Leu- and -Tyr-|-Trp bonds also occurs).. Its function is as follows. Cleaves peptides in various proteins in a process that requires ATP hydrolysis. Has a chymotrypsin-like activity. Plays a major role in the degradation of misfolded proteins. In Aromatoleum aromaticum (strain DSM 19018 / LMG 30748 / EbN1) (Azoarcus sp. (strain EbN1)), this protein is ATP-dependent Clp protease proteolytic subunit.